Reading from the N-terminus, the 790-residue chain is Pre-mRNA-splicing factor cwf3 (790 aa).

HAT repeat units lie at residues 12–44, 45–77, 89–121, 123–157, 159–190, 193–228, 233–266, 268–303, 331–364, 368–402, 404–440, 457–492, 494–526, 528–562, 567–601, 639–673, and 675–709; these read DLINVDDEPFELELLRDPYSLKSWLRYIKTHEG, STLEKRVLLFERACSELPGSYKIWKSYLELRVA, EAFASVNDCFERSLILLHKMPVIWKLYLQFLMK, PNVTKIRCTFNSALRALPVTQHDDIWDMFTKYAED, GGLFCIHVYRRYIQVEPRAIENYIEILCKLGL, EAARQYEDILNRPVFLSAKRKSNYQIWLEFSELVVQ, TQNIDVEKVFRAGIKRFSDQAGKLWTYLAQYYIR, GDYEKARSTFYEGMNNIMTVRNFTIIFDAFVEFEEQ, KILDKRPLYINDVLLRQNINNVDEWLRRVKFLED, KVVQVYTDAIKNVNPKLAHGSLGKLFSEFARFYEN, DDLEQSRIIFEKATHVPYKTVNELAQVWIDWAEMELR, APRKSHISFFDESLSPQVRLHKSSKIWMYYLDLEES, GTIETTRKLYDRVFELKIATPQVVVNYANLLEE, AYFEDSFKIYERGVALFSYPVAFELWNLYLTKFVK, THMERTRDLFEQALEGCPPEFSKSIYLLYADFEEK, YGVLATRTVYEKAIESLSDSEVKDMCLRFAEMETK, and GEIDRARLIYIHGSQYCDPRVETDYWKAWQEFEIR. The interval 769–790 is disordered; it reads LAGFVLSKSNPQETSKITGEEN. Residues 775–790 show a composition bias toward polar residues; the sequence is SKSNPQETSKITGEEN.

Belongs to the crooked-neck family. Belongs to the 40S cdc5-associated complex (or cwf complex), a spliceosome sub-complex reminiscent of a late-stage spliceosome composed of the U2, U5 and U6 snRNAs and at least brr2, cdc5, cwf2/prp3, cwf3/syf1, cwf4/syf3, cwf5/ecm2, spp42/cwf6, cwf7/spf27, cwf8, cwf9, cwf10, cwf11, cwf12, prp45/cwf13, cwf14, cwf15, cwf16, cwf17, cwf18, cwf19, cwf20, cwf21, cwf22, cwf23, cwf24, cwf25, cwf26, cyp7/cwf27, cwf28, cwf29/ist3, lea1, msl1, prp5/cwf1, prp10, prp12/sap130, prp17, prp22, sap61, sap62, sap114, sap145, slu7, smb1, smd1, smd3, smf1, smg1 and syf2.

It is found in the nucleus. Functionally, involved in pre-mRNA splicing and cell cycle progression. This is Pre-mRNA-splicing factor cwf3 (cwf3) from Schizosaccharomyces pombe (strain 972 / ATCC 24843) (Fission yeast).